A 621-amino-acid polypeptide reads, in one-letter code: Acetolactate synthase (621 aa).

The segment covering 1-19 (MSAPTRRPAPDAPGAAGIA) has biased composition (low complexity). Residues 1–39 (MSAPTRRPAPDAPGAAGIAPAPPAPAAKPAAGKPKRIGP) form a disordered region. E89 serves as a coordination point for thiamine diphosphate. Residues R190, 296–317 (HGTVAAVAALQRSDLLIALGTR), and 339–358 (DIDPAEIGKNRHADVPIVGD) contribute to the FAD site. Residues 432-512 (HDQMWAAQFI…IKVALINNGN (81 aa)) form a thiamine pyrophosphate binding region. Mg(2+)-binding residues include D483 and N510.

The protein belongs to the TPP enzyme family. Requires Mg(2+) as cofactor. Thiamine diphosphate serves as cofactor.

The enzyme catalyses 2 pyruvate + H(+) = (2S)-2-acetolactate + CO2. It functions in the pathway amino-acid biosynthesis; L-isoleucine biosynthesis; L-isoleucine from 2-oxobutanoate: step 1/4. The protein operates within amino-acid biosynthesis; L-valine biosynthesis; L-valine from pyruvate: step 1/4. This Mycobacterium avium protein is Acetolactate synthase (ilvB).